We begin with the raw amino-acid sequence, 349 residues long: uncharacterized protein (349 aa).

The helical transmembrane segment at 16 to 36 threads the bilayer; the sequence is LVITIISTGLIFGMTLVLTGL. The tract at residues 111-139 is disordered; sequence FGAPEHGPGMPRVSEGRSPSKPDEVAASS. A compositionally biased stretch (basic and acidic residues) spans 124–134; sequence SEGRSPSKPDE. 3 consecutive transmembrane segments (helical) span residues 231–251, 284–304, and 307–327; these read ISIVAVLLWIVAVLIVGSVVY, VIALLAAVVGVVLAQVLAPLF, and IVAVPVGAYLALPVAAIVIGL.

This sequence belongs to the ABC-4 integral membrane protein family. The complex is composed of two ATP-binding proteins (MT0079), two transmembrane proteins (MT0078) and a solute-binding protein.

Its subcellular location is the cell membrane. Probably part of an ABC transporter complex. Probably responsible for the translocation of the substrate across the membrane. This is an uncharacterized protein from Mycobacterium tuberculosis (strain CDC 1551 / Oshkosh).